The sequence spans 218 residues: N-(5'-phosphoribosyl)anthranilate isomerase (218 aa).

It belongs to the TrpF family.

The catalysed reaction is N-(5-phospho-beta-D-ribosyl)anthranilate = 1-(2-carboxyphenylamino)-1-deoxy-D-ribulose 5-phosphate. Its pathway is amino-acid biosynthesis; L-tryptophan biosynthesis; L-tryptophan from chorismate: step 3/5. The sequence is that of N-(5'-phosphoribosyl)anthranilate isomerase from Rhodopseudomonas palustris (strain BisB18).